The chain runs to 104 residues: Large ribosomal subunit protein uL23 (104 aa).

It belongs to the universal ribosomal protein uL23 family. In terms of assembly, part of the 50S ribosomal subunit. Contacts protein L29, and trigger factor when it is bound to the ribosome.

Functionally, one of the early assembly proteins it binds 23S rRNA. One of the proteins that surrounds the polypeptide exit tunnel on the outside of the ribosome. Forms the main docking site for trigger factor binding to the ribosome. The protein is Large ribosomal subunit protein uL23 of Cupriavidus metallidurans (strain ATCC 43123 / DSM 2839 / NBRC 102507 / CH34) (Ralstonia metallidurans).